A 50-amino-acid chain; its full sequence is Photosystem II reaction center protein M (50 aa).

A helical transmembrane segment spans residues 7–27; sequence GFVASLLFVGIPTIFLIGLFI.

It belongs to the PsbM family. As to quaternary structure, PSII is composed of 1 copy each of membrane proteins PsbA, PsbB, PsbC, PsbD, PsbE, PsbF, PsbH, PsbI, PsbJ, PsbK, PsbL, PsbM, PsbT, PsbX, PsbY, Psb30/Ycf12, peripheral proteins PsbO, CyanoQ (PsbQ), PsbU, PsbV and a large number of cofactors. It forms dimeric complexes.

Its subcellular location is the cellular thylakoid membrane. In terms of biological role, one of the components of the core complex of photosystem II (PSII). PSII is a light-driven water:plastoquinone oxidoreductase that uses light energy to abstract electrons from H(2)O, generating O(2) and a proton gradient subsequently used for ATP formation. It consists of a core antenna complex that captures photons, and an electron transfer chain that converts photonic excitation into a charge separation. This subunit is found at the monomer-monomer interface. The polypeptide is Photosystem II reaction center protein M (Prochlorococcus marinus subsp. pastoris (strain CCMP1986 / NIES-2087 / MED4)).